The chain runs to 261 residues: Triosephosphate isomerase (261 aa).

Substrate is bound at residue 10–12 (NWK). Catalysis depends on histidine 100, which acts as the Electrophile. The Proton acceptor role is filled by glutamate 172. Substrate is bound by residues glycine 178, serine 218, and 239–240 (GG).

It belongs to the triosephosphate isomerase family. Homodimer.

The protein resides in the cytoplasm. The enzyme catalyses D-glyceraldehyde 3-phosphate = dihydroxyacetone phosphate. It functions in the pathway carbohydrate biosynthesis; gluconeogenesis. It participates in carbohydrate degradation; glycolysis; D-glyceraldehyde 3-phosphate from glycerone phosphate: step 1/1. Involved in the gluconeogenesis. Catalyzes stereospecifically the conversion of dihydroxyacetone phosphate (DHAP) to D-glyceraldehyde-3-phosphate (G3P). The sequence is that of Triosephosphate isomerase from Mycobacterium avium (strain 104).